Here is a 395-residue protein sequence, read N- to C-terminus: Small RNA 2'-O-methyltransferase (395 aa).

S-adenosyl-L-methionine-binding residues include Asp79 and Ser115. The Mg(2+) site is built by Glu133, Glu136, His137, and His182.

Belongs to the methyltransferase superfamily. HEN1 family. Mg(2+) is required as a cofactor. Specifically expressed in testis.

Its subcellular location is the cytoplasm. It carries out the reaction small RNA 3'-end nucleotide + S-adenosyl-L-methionine = small RNA 3'-end 2'-O-methylnucleotide + S-adenosyl-L-homocysteine + H(+). Functionally, methyltransferase that adds a 2'-O-methyl group at the 3'-end of piRNAs, a class of 24 to 30 nucleotide RNAs that are generated by a Dicer-independent mechanism and are primarily derived from transposons and other repeated sequence elements. This probably protects the 3'-end of piRNAs from uridylation activity and subsequent degradation. Stabilization of piRNAs is essential for gametogenesis. This is Small RNA 2'-O-methyltransferase (Henmt1) from Mus musculus (Mouse).